We begin with the raw amino-acid sequence, 273 residues long: Putative carboxypeptidase YodJ (273 aa).

The N-terminal stretch at 1–23 (MKKSGKWFSLAAALSVTAIVGAG) is a signal peptide. A lipid anchor (N-palmitoyl cysteine) is attached at C24. Residue C24 is the site of S-diacylglycerol cysteine attachment. The interval 27-58 (SNGDAQKDTKTTAETKQTEQKTADSKKSNTQN) is disordered. Over residues 31–53 (AQKDTKTTAETKQTEQKTADSKK) the composition is skewed to basic and acidic residues.

This sequence belongs to the peptidase M15B family.

The protein localises to the cell membrane. The protein is Putative carboxypeptidase YodJ (yodJ) of Bacillus subtilis (strain 168).